The primary structure comprises 137 residues: Nucleoside diphosphate kinase (137 aa).

The ATP site is built by K9, F57, R85, T91, R102, and N112. H115 (pros-phosphohistidine intermediate) is an active-site residue.

It belongs to the NDK family. As to quaternary structure, homotetramer. Mg(2+) is required as a cofactor.

The protein localises to the cytoplasm. It carries out the reaction a 2'-deoxyribonucleoside 5'-diphosphate + ATP = a 2'-deoxyribonucleoside 5'-triphosphate + ADP. It catalyses the reaction a ribonucleoside 5'-diphosphate + ATP = a ribonucleoside 5'-triphosphate + ADP. Its function is as follows. Major role in the synthesis of nucleoside triphosphates other than ATP. The ATP gamma phosphate is transferred to the NDP beta phosphate via a ping-pong mechanism, using a phosphorylated active-site intermediate. The chain is Nucleoside diphosphate kinase from Wolinella succinogenes (strain ATCC 29543 / DSM 1740 / CCUG 13145 / JCM 31913 / LMG 7466 / NCTC 11488 / FDC 602W) (Vibrio succinogenes).